A 248-amino-acid polypeptide reads, in one-letter code: CKLF-like MARVEL transmembrane domain-containing protein 2 (248 aa).

The interval M1 to G63 is disordered. Residues E12 to A22 are compositionally biased toward pro residues. Positions K23–G63 are enriched in basic and acidic residues. The region spanning F82–R204 is the MARVEL domain. The next 3 membrane-spanning stretches (helical) occupy residues L116–I136, I147–A167, and Y178–L198. The interval A208–K248 is disordered. The segment covering P231–K248 has biased composition (pro residues).

It belongs to the chemokine-like factor family. Highly expressed in testis.

It localises to the membrane. The sequence is that of CKLF-like MARVEL transmembrane domain-containing protein 2 (CMTM2) from Homo sapiens (Human).